We begin with the raw amino-acid sequence, 87 residues long: Conotoxin QcMNCL-XIII0.1 (87 aa).

The signal sequence occupies residues 1 to 18 (MNCLQLLLVLLLISTIAA). Positions 19 to 34 (LHGDGRVPQRRGRNIR) are excised as a propeptide.

Post-translationally, contains 4 disulfide bonds. Expressed by the venom duct.

It is found in the secreted. Functionally, may interact and inhibit Cav3.1/CACNA1G calcium channels. In a ex vivo model, shows ability to block nerve signal transduction. The sequence is that of Conotoxin QcMNCL-XIII0.1 from Conus quercinus (Oak cone).